The sequence spans 689 residues: Glycine--tRNA ligase beta subunit (689 aa).

This sequence belongs to the class-II aminoacyl-tRNA synthetase family. Tetramer of two alpha and two beta subunits.

Its subcellular location is the cytoplasm. The catalysed reaction is tRNA(Gly) + glycine + ATP = glycyl-tRNA(Gly) + AMP + diphosphate. This chain is Glycine--tRNA ligase beta subunit, found in Shewanella amazonensis (strain ATCC BAA-1098 / SB2B).